Consider the following 1555-residue polypeptide: UDP-glucose:glycoprotein glucosyltransferase 1 (1555 aa).

An N-terminal signal peptide occupies residues methionine 1–alanine 42. Residues asparagine 536 and asparagine 1228 are each glycosylated (N-linked (GlcNAc...) asparagine). A glucosyltransferase region spans residues lysine 1244 to leucine 1555. Serine 1277 is subject to Phosphoserine. Residues glycine 1534–leucine 1555 are disordered. Positions arginine 1552–leucine 1555 match the Prevents secretion from ER motif.

This sequence belongs to the glycosyltransferase 8 family. Monomer as well as in a tight complex with SELENOF. Interacts with METTL23. Part of a large chaperone multiprotein complex comprising DNAJB11, HSP90B1, HSPA5, HYOU, PDIA2, PDIA4, PDIA6, PPIB, SDF2L1, UGGT1 and very small amounts of ERP29, but not, or at very low levels, CALR nor CANX. Ca(2+) serves as cofactor. The cofactor is Mn(2+). Higher levels in pancreas, skeletal muscle, kidney, and brain. Low levels in lung and heart.

The protein localises to the endoplasmic reticulum lumen. It is found in the endoplasmic reticulum-Golgi intermediate compartment. It carries out the reaction N(4)-(alpha-D-Man-(1-&gt;2)-alpha-D-Man-(1-&gt;2)-alpha-D-Man-(1-&gt;3)-[alpha-D-Man-(1-&gt;2)-alpha-D-Man-(1-&gt;3)-[alpha-D-Man-(1-&gt;2)-alpha-D-Man-(1-&gt;6)]-alpha-D-Man-(1-&gt;6)]-beta-D-Man-(1-&gt;4)-beta-D-GlcNAc-(1-&gt;4)-beta-D-GlcNAc)-L-asparaginyl-[protein] (N-glucan mannose isomer 9A1,2,3B1,2,3) + UDP-alpha-D-glucose = N(4)-(alpha-D-Glc-(1-&gt;3)-alpha-D-Man-(1-&gt;2)-alpha-D-Man-(1-&gt;2)-alpha-D-Man-(1-&gt;3)-[alpha-D-Man-(1-&gt;2)-alpha-D-Man-(1-&gt;3)-[alpha-D-Man-(1-&gt;2)-alpha-D-Man-(1-&gt;6)]-alpha-D-Man-(1-&gt;6)]-beta-D-Man-(1-&gt;4)-beta-D-GlcNAc-(1-&gt;4)-beta-D-GlcNAc)-L-asparaginyl-[protein] + UDP + H(+). It functions in the pathway protein modification; protein glycosylation. With respect to regulation, catalytic activity is enhanced by complex formation with SELENOF. Recognizes glycoproteins with minor folding defects. Reglucosylates single N-glycans near the misfolded part of the protein, thus providing quality control for protein folding in the endoplasmic reticulum. Reglucosylated proteins are recognized by calreticulin for recycling to the endoplasmic reticulum and refolding or degradation. This Homo sapiens (Human) protein is UDP-glucose:glycoprotein glucosyltransferase 1 (UGGT1).